We begin with the raw amino-acid sequence, 498 residues long: Glycerol kinase 1 (498 aa).

T12 provides a ligand contact to ADP. Residues T12, T13, and S14 each contribute to the ATP site. Residue T12 participates in sn-glycerol 3-phosphate binding. R16 is an ADP binding site. Positions 82, 83, 134, and 243 each coordinate sn-glycerol 3-phosphate. The glycerol site is built by R82, E83, Y134, D243, and Q244. T265 and G308 together coordinate ADP. 4 residues coordinate ATP: T265, G308, Q312, and G409. The ADP site is built by G409 and N413.

This sequence belongs to the FGGY kinase family. Homotetramer and homodimer (in equilibrium).

It carries out the reaction glycerol + ATP = sn-glycerol 3-phosphate + ADP + H(+). It participates in polyol metabolism; glycerol degradation via glycerol kinase pathway; sn-glycerol 3-phosphate from glycerol: step 1/1. Activated by phosphorylation and inhibited by fructose 1,6-bisphosphate (FBP). Its function is as follows. Key enzyme in the regulation of glycerol uptake and metabolism. Catalyzes the phosphorylation of glycerol to yield sn-glycerol 3-phosphate. The sequence is that of Glycerol kinase 1 from Clostridium tetani (strain Massachusetts / E88).